The following is a 142-amino-acid chain: Large ribosomal subunit protein uL22c (142 aa).

Belongs to the universal ribosomal protein uL22 family. As to quaternary structure, part of the 50S ribosomal subunit.

The protein localises to the plastid. The protein resides in the chloroplast. This protein binds specifically to 23S rRNA. In terms of biological role, the globular domain of the protein is located near the polypeptide exit tunnel on the outside of the subunit, while an extended beta-hairpin is found that lines the wall of the exit tunnel in the center of the 70S ribosome. The protein is Large ribosomal subunit protein uL22c (rpl22) of Ceratophyllum demersum (Rigid hornwort).